A 145-amino-acid polypeptide reads, in one-letter code: Peptide methionine sulfoxide reductase MsrB (145 aa).

One can recognise a MsrB domain in the interval 6–129 (EEELKQTLTD…NAAALRFVPV (124 aa)). The Nucleophile role is filled by C118.

Belongs to the MsrB Met sulfoxide reductase family.

It catalyses the reaction L-methionyl-[protein] + [thioredoxin]-disulfide + H2O = L-methionyl-(R)-S-oxide-[protein] + [thioredoxin]-dithiol. The chain is Peptide methionine sulfoxide reductase MsrB from Enterococcus faecalis (strain ATCC 700802 / V583).